The primary structure comprises 218 residues: Protein GrpE (218 aa).

Basic and acidic residues-rich tracts occupy residues 1–13 and 20–32; these read MSKN…HQNN and VDKK…NKQE. Residues 1–32 are disordered; that stretch reads MSKNNENIKHQNNDKVNNQVDKKETKNHNKQE.

It belongs to the GrpE family. As to quaternary structure, homodimer.

The protein localises to the cytoplasm. In terms of biological role, participates actively in the response to hyperosmotic and heat shock by preventing the aggregation of stress-denatured proteins, in association with DnaK and GrpE. It is the nucleotide exchange factor for DnaK and may function as a thermosensor. Unfolded proteins bind initially to DnaJ; upon interaction with the DnaJ-bound protein, DnaK hydrolyzes its bound ATP, resulting in the formation of a stable complex. GrpE releases ADP from DnaK; ATP binding to DnaK triggers the release of the substrate protein, thus completing the reaction cycle. Several rounds of ATP-dependent interactions between DnaJ, DnaK and GrpE are required for fully efficient folding. This chain is Protein GrpE, found in Ureaplasma parvum serovar 3 (strain ATCC 27815 / 27 / NCTC 11736).